A 476-amino-acid polypeptide reads, in one-letter code: Bifunctional protein HldE (476 aa).

Residues 1–320 (MQNPHIPSFA…RAVHQEGGSG (320 aa)) form a ribokinase region. 196-199 (NLSE) contacts ATP. Asp265 is a catalytic residue. A cytidylyltransferase region spans residues 345 to 476 (FTNGCFDIIH…KIVERIREKD (132 aa)).

It in the N-terminal section; belongs to the carbohydrate kinase PfkB family. In the C-terminal section; belongs to the cytidylyltransferase family. In terms of assembly, homodimer.

The enzyme catalyses D-glycero-beta-D-manno-heptose 7-phosphate + ATP = D-glycero-beta-D-manno-heptose 1,7-bisphosphate + ADP + H(+). It catalyses the reaction D-glycero-beta-D-manno-heptose 1-phosphate + ATP + H(+) = ADP-D-glycero-beta-D-manno-heptose + diphosphate. Its pathway is nucleotide-sugar biosynthesis; ADP-L-glycero-beta-D-manno-heptose biosynthesis; ADP-L-glycero-beta-D-manno-heptose from D-glycero-beta-D-manno-heptose 7-phosphate: step 1/4. The protein operates within nucleotide-sugar biosynthesis; ADP-L-glycero-beta-D-manno-heptose biosynthesis; ADP-L-glycero-beta-D-manno-heptose from D-glycero-beta-D-manno-heptose 7-phosphate: step 3/4. Functionally, catalyzes the phosphorylation of D-glycero-D-manno-heptose 7-phosphate at the C-1 position to selectively form D-glycero-beta-D-manno-heptose-1,7-bisphosphate. In terms of biological role, catalyzes the ADP transfer from ATP to D-glycero-beta-D-manno-heptose 1-phosphate, yielding ADP-D-glycero-beta-D-manno-heptose. This chain is Bifunctional protein HldE, found in Alcanivorax borkumensis (strain ATCC 700651 / DSM 11573 / NCIMB 13689 / SK2).